The chain runs to 124 residues: Replication restart protein PriB (124 aa).

Residues isoleucine 12–aspartate 112 enclose the SSB domain.

The protein belongs to the PriB family. Homodimer. Interacts with PriA and DnaT. Component of the replication restart primosome. Primosome assembly occurs via a 'hand-off' mechanism. PriA binds to replication forks, subsequently PriB then DnaT bind; DnaT then displaces ssDNA to generate the helicase loading substrate.

Its function is as follows. Involved in the restart of stalled replication forks, which reloads the replicative helicase on sites other than the origin of replication; the PriA-PriB pathway is the major replication restart pathway. During primosome assembly it facilitates complex formation between PriA and DnaT on DNA; stabilizes PriA on DNA. Stimulates the DNA unwinding activity of PriA helicase. The sequence is that of Replication restart protein PriB from Haemophilus ducreyi (strain 35000HP / ATCC 700724).